Consider the following 485-residue polypeptide: Glycogen synthase (485 aa).

An ADP-alpha-D-glucose-binding site is contributed by Lys-17.

Belongs to the glycosyltransferase 1 family. Bacterial/plant glycogen synthase subfamily.

It catalyses the reaction [(1-&gt;4)-alpha-D-glucosyl](n) + ADP-alpha-D-glucose = [(1-&gt;4)-alpha-D-glucosyl](n+1) + ADP + H(+). The protein operates within glycan biosynthesis; glycogen biosynthesis. Its function is as follows. Synthesizes alpha-1,4-glucan chains using ADP-glucose. The protein is Glycogen synthase of Novosphingobium aromaticivorans (strain ATCC 700278 / DSM 12444 / CCUG 56034 / CIP 105152 / NBRC 16084 / F199).